A 422-amino-acid chain; its full sequence is tRNA(Met) cytidine acetate ligase (422 aa).

Residues 7-20 (ITEYNPFHNGHLYH), G102, N172, and R197 each bind ATP.

Belongs to the TmcAL family.

It is found in the cytoplasm. The enzyme catalyses cytidine(34) in elongator tRNA(Met) + acetate + ATP = N(4)-acetylcytidine(34) in elongator tRNA(Met) + AMP + diphosphate. In terms of biological role, catalyzes the formation of N(4)-acetylcytidine (ac(4)C) at the wobble position of elongator tRNA(Met), using acetate and ATP as substrates. First activates an acetate ion to form acetyladenylate (Ac-AMP) and then transfers the acetyl group to tRNA to form ac(4)C34. This Halothermothrix orenii (strain H 168 / OCM 544 / DSM 9562) protein is tRNA(Met) cytidine acetate ligase.